A 607-amino-acid chain; its full sequence is UvrABC system protein C (607 aa).

The GIY-YIG domain occupies 15–92 (SQPGSYQMKD…IKRYRPYFNI (78 aa)). One can recognise a UVR domain in the interval 197 to 232 (GKAISDIKKKMKRASDSTEYELAADFRDRLKFIDQT).

The protein belongs to the UvrC family. Interacts with UvrB in an incision complex.

Its subcellular location is the cytoplasm. In terms of biological role, the UvrABC repair system catalyzes the recognition and processing of DNA lesions. UvrC both incises the 5' and 3' sides of the lesion. The N-terminal half is responsible for the 3' incision and the C-terminal half is responsible for the 5' incision. The protein is UvrABC system protein C of Oenococcus oeni (strain ATCC BAA-331 / PSU-1).